The chain runs to 229 residues: 2-C-methyl-D-erythritol 4-phosphate cytidylyltransferase (229 aa).

Belongs to the IspD/TarI cytidylyltransferase family. IspD subfamily.

It carries out the reaction 2-C-methyl-D-erythritol 4-phosphate + CTP + H(+) = 4-CDP-2-C-methyl-D-erythritol + diphosphate. Its pathway is isoprenoid biosynthesis; isopentenyl diphosphate biosynthesis via DXP pathway; isopentenyl diphosphate from 1-deoxy-D-xylulose 5-phosphate: step 2/6. Catalyzes the formation of 4-diphosphocytidyl-2-C-methyl-D-erythritol from CTP and 2-C-methyl-D-erythritol 4-phosphate (MEP). In Neisseria gonorrhoeae (strain ATCC 700825 / FA 1090), this protein is 2-C-methyl-D-erythritol 4-phosphate cytidylyltransferase.